Reading from the N-terminus, the 164-residue chain is Cyclic pyranopterin monophosphate synthase (164 aa).

Residues 73-75 and 111-112 each bind substrate; these read LCH and ME. The active site involves aspartate 126.

This sequence belongs to the MoaC family. In terms of assembly, homohexamer; trimer of dimers.

It catalyses the reaction (8S)-3',8-cyclo-7,8-dihydroguanosine 5'-triphosphate = cyclic pyranopterin phosphate + diphosphate. It functions in the pathway cofactor biosynthesis; molybdopterin biosynthesis. In terms of biological role, catalyzes the conversion of (8S)-3',8-cyclo-7,8-dihydroguanosine 5'-triphosphate to cyclic pyranopterin monophosphate (cPMP). The polypeptide is Cyclic pyranopterin monophosphate synthase (Herpetosiphon aurantiacus (strain ATCC 23779 / DSM 785 / 114-95)).